Here is a 210-residue protein sequence, read N- to C-terminus: Thiamine-phosphate synthase 2 (210 aa).

4-amino-2-methyl-5-(diphosphooxymethyl)pyrimidine contacts are provided by residues 38-42 (QLREK) and Asp-70. The Mg(2+) site is built by Asp-71 and Glu-90. Thr-109 is a 4-amino-2-methyl-5-(diphosphooxymethyl)pyrimidine binding site. 135 to 137 (TTT) is a binding site for 2-[(2R,5Z)-2-carboxy-4-methylthiazol-5(2H)-ylidene]ethyl phosphate. Lys-138 serves as a coordination point for 4-amino-2-methyl-5-(diphosphooxymethyl)pyrimidine. 2-[(2R,5Z)-2-carboxy-4-methylthiazol-5(2H)-ylidene]ethyl phosphate is bound at residue Gly-165.

This sequence belongs to the thiamine-phosphate synthase family. Mg(2+) is required as a cofactor.

It catalyses the reaction 2-[(2R,5Z)-2-carboxy-4-methylthiazol-5(2H)-ylidene]ethyl phosphate + 4-amino-2-methyl-5-(diphosphooxymethyl)pyrimidine + 2 H(+) = thiamine phosphate + CO2 + diphosphate. The catalysed reaction is 2-(2-carboxy-4-methylthiazol-5-yl)ethyl phosphate + 4-amino-2-methyl-5-(diphosphooxymethyl)pyrimidine + 2 H(+) = thiamine phosphate + CO2 + diphosphate. It carries out the reaction 4-methyl-5-(2-phosphooxyethyl)-thiazole + 4-amino-2-methyl-5-(diphosphooxymethyl)pyrimidine + H(+) = thiamine phosphate + diphosphate. It participates in cofactor biosynthesis; thiamine diphosphate biosynthesis; thiamine phosphate from 4-amino-2-methyl-5-diphosphomethylpyrimidine and 4-methyl-5-(2-phosphoethyl)-thiazole: step 1/1. Its function is as follows. Condenses 4-methyl-5-(beta-hydroxyethyl)thiazole monophosphate (THZ-P) and 2-methyl-4-amino-5-hydroxymethyl pyrimidine pyrophosphate (HMP-PP) to form thiamine monophosphate (TMP). The chain is Thiamine-phosphate synthase 2 from Streptococcus pneumoniae serotype 4 (strain ATCC BAA-334 / TIGR4).